A 2542-amino-acid chain; its full sequence is MVALSLKICVRHCNVVKTMQFEPSTAVYDACRVIRERVPEAQTGQASDYGLFLSDEDPRKGIWLEAGRTLDYYMLRNGDILEYKKKQRPQKIRMLDGSVKTVMVDDSKTVGELLVTICSRIGITNYEEYSLIQETIEEKKEEGTGTLKKDRTLLRDERKMEKLKAKLHTDDDLNWLDHSRTFREQGVDENETLLLRRKFFYSDQNVDSRDPVQLNLLYVQARDDILNGSHPVSFEKACEFGGFQAQIQFGPHVEHKHKPGFLDLKEFLPKEYIKQRGAEKRIFQEHKNCGEMSEIEAKVKYVKLARSLRTYGVSFFLVKEKMKGKNKLVPRLLGITKDSVMRVDEKTKEVLQEWPLTTVKRWAASPKSFTLDFGEYQESYYSVQTTEGEQISQLIAGYIDIILKKKQSKDRFGLEGDEESTMLEESVSPKKSTILQQQFNRTGKAEHGSVALPAVMRSGSSGPETFNVGSMPSPQQQVMVGQMHRGHMPPLTSAQQALMGTINTSMHAVQQAQDDLSELDSLPPLGQDMASRVWVQNKVDESKHEIHSQVDAITAGTASVVNLTAGDPADTDYTAVGCAITTISSNLTEMSKGVKLLAALMDDEVGSGEDLLRAARTLAGAVSDLLKAVQPTSGEPRQTVLTAAGSIGQASGDLLRQIGENETDERFQDVLMSLAKAVANAAAMLVLKAKNVAQVAEDTVLQNRVIAAATQCALSTSQLVACAKVVSPTISSPVCQEQLIEAGKLVDRSVENCVRACQAATTDSELLKQVSAAASVVSQALHDLLQHVRQFASRGEPIGRYDQATDTIMCVTESIFSSMGDAGEMVRQARVLAQATSDLVNAMRSDAEAEIDMENSKKLLAAAKLLADSTARMVEAAKGAAANPENEDQQQRLREAAEGLRVATNAAAQNAIKKKIVNRLEVAAKQAAAAATQTIAASQNAAVSNKNPAAQQQLVQSCKAVADHIPQLVQGVRGSQAQAEDLSAQLALIISSQNFLQPGSKMVSSAKAAVPTVSDQAAAMQLSQCAKNLATSLAELRTASQKAHEACGPMEIDSALNTVQTLKNELQDAKMAAVESQLKPLPGETLEKCAQDLGSTSKAVGSSMAQLLTCAAQGNEHYTGVAARETAQALKTLAQAARGVAASTTDPAAAHAMLDSARDVMEGSAMLIQEAKQALIAPGDAERQQRLAQVAKAVSHSLNNCVNCLPGQKDVDVALKSIGESSKKLLVDSLPPSTKPFQEAQSELNQAAADLNQSAGEVVHATRGQSGELAAASGKFSDDFDEFLDAGIEMAGQAQTKEDQIQVIGNLKNISMASSKLLLAAKSLSVDPGAPNAKNLLAAAARAVTESINQLITLCTQQAPGQKECDNALRELETVKGMLDNPNEPVSDLSYFDCIESVMENSKVLGESMAGISQNAKTGDLPAFGECVGIASKALCGLTEAAAQAAYLVGISDPNSQAGHQGLVDPIQFARANQAIQMACQNLVDPGSSPSQVLSAATIVAKHTSALCNACRIASSKTANPVAKRHFVQSAKEVANSTANLVKTIKALDGDFSEDNRNKCRIATAPLIEAVENLTAFASNPEFVSIPAQISSEGSQAQEPILVSAKTMLESSSYLIRTARSLAINPKDPPTWSVLAGHSHTVSDSIKSLITSIRDKAPGQRECDYSIDGINRCIRDIEQASLAAVSQSLATRDDISVEALQEQLTSVVQEIGHLIDPIATAARGEAAQLGHKVTQLASYFEPLILAAVGVASKILDHQQQMTVLDQTKTLAESALQMLYAAKEGGGNPKAQHTHDAITEAAQLMKEAVDDIMVTLNEAASEVGLVGGMVDAIAEAMSKLDEGTPPEPKGTFVDYQTTVVKYSKAIAVTAQEMMTKSVTNPEELGGLASQMTSDYGHLAFQGQMAAATAEPEEIGFQIRTRVQDLGHGCIFLVQKAGALQVCPTDSYTKRELIECARAVTEKVSLVLSALQAGNKGTQACITAATAVSGIIADLDTTIMFATAGTLNAENSETFADHRENILKTAKALVEDTKLLVSGAASTPDKLAQAAQSSAATITQLAEVVKLGAASLGSDDPETQVVLINAIKDVAKALSDLISATKGAASKPVDDPSMYQLKGAAKVMVTNVTSLLKTVKAVEDEATRGTRALEATIECIKQELTVFQSKDVPEKTSSPEESIRMTKGITMATAKAVAAGNSCRQEDVIATANLSRKAVSDMLTACKQASFHPDVSDEVRTRALRFGTECTLGYLDLLEHVLVILQKPTPEFKQQLAAFSKRVAGAVTELIQAAEAMKGTEWVDPEDPTVIAETELLGAAASIEAAAKKLEQLKPRAKPKQADETLDFEEQILEAAKSIAAATSALVKSASAAQRELVAQGKVGSIPANAADDGQWSQGLISAARMVAAATSSLCEAANASVQGHASEEKLISSAKQVAASTAQLLVACKVKADQDSEAMRRLQAAGNAVKRASDNLVRAAQKAAFGKADDDDVVVKTKFVGGIAQIIAAQEEMLKKERELEEARKKLAQIRQQQYKFLPTELREDEG.

The region spanning 88–406 (RPQKIRMLDG…GYIDIILKKK (319 aa)) is the FERM domain. The interaction with PIP5K1C stretch occupies residues 312–406 (GVSFFLVKEK…GYIDIILKKK (95 aa)). Residues serine 428, serine 449, serine 623, and serine 1023 each carry the phosphoserine modification. A Phosphotyrosine modification is found at tyrosine 1665. Threonine 1843 is modified (phosphothreonine). Positions 2294-2533 (TEWVDPEDPT…QIRQQQYKFL (240 aa)) constitute an I/LWEQ domain.

In terms of assembly, interacts directly with PIP5K1C.

The protein resides in the cytoplasm. It is found in the cell junction. It localises to the focal adhesion. The protein localises to the synapse. Its subcellular location is the cell membrane. The protein resides in the cytoskeleton. In terms of biological role, as a major component of focal adhesion plaques that links integrin to the actin cytoskeleton, may play an important role in cell adhesion. Recruits PIP5K1C to focal adhesion plaques and strongly activates its kinase activity. This is Talin-2 (TLN2) from Homo sapiens (Human).